A 149-amino-acid chain; its full sequence is Large ribosomal subunit protein uL15 (149 aa).

Residues 1-57 form a disordered region; sequence MRLNDPKPKTGSQHRRRRVGRGIAAGQGASCGFGMRGQKSRSGRPTRPGFEGGQNPL. Residues 23 to 35 show a composition bias toward gly residues; the sequence is IAAGQGASCGFGM.

Belongs to the universal ribosomal protein uL15 family. In terms of assembly, part of the 50S ribosomal subunit.

Binds to the 23S rRNA. The polypeptide is Large ribosomal subunit protein uL15 (Acaryochloris marina (strain MBIC 11017)).